We begin with the raw amino-acid sequence, 221 residues long: Probable serine protease inhibitor 6 (221 aa).

Positions 1–22 (MKCLFLLCLCLFPIVVFSSTFT) are cleaved as a signal peptide. Positions 23-28 (SQNPIN) are excised as a propeptide. The short motif at 25-30 (NPINLP) is the Vacuolar targeting signal element. Cystine bridges form between Cys76–Cys125 and Cys174–Cys191.

Belongs to the protease inhibitor I3 (leguminous Kunitz-type inhibitor) family.

The protein localises to the vacuole. Inhibitor of trypsin (serine protease). May protect the plant by inhibiting proteases of invading organisms. This chain is Probable serine protease inhibitor 6, found in Solanum tuberosum (Potato).